The sequence spans 276 residues: Large ribosomal subunit protein uL2c (276 aa).

Positions 225–276 (AMNPVDHPHGGGEGRTPIGRKKPVTPWGYSALGKKSRKRNRYSDASILRRRE) are disordered.

It belongs to the universal ribosomal protein uL2 family. Part of the 50S ribosomal subunit.

It is found in the plastid. It localises to the chloroplast. This is Large ribosomal subunit protein uL2c (rpl2) from Pinus koraiensis (Korean pine).